The following is a 148-amino-acid chain: Mediator of RNA polymerase II transcription subunit 31 (148 aa).

This sequence belongs to the Mediator complex subunit 31 family. In terms of assembly, component of the Mediator complex.

The protein localises to the nucleus. Its function is as follows. Component of the Mediator complex, a coactivator involved in the regulated transcription of nearly all RNA polymerase II-dependent genes. Mediator functions as a bridge to convey information from gene-specific regulatory proteins to the basal RNA polymerase II transcription machinery. Mediator is recruited to promoters by direct interactions with regulatory proteins and serves as a scaffold for the assembly of a functional preinitiation complex with RNA polymerase II and the general transcription factors. The polypeptide is Mediator of RNA polymerase II transcription subunit 31 (Taenia solium (Pork tapeworm)).